Here is a 319-residue protein sequence, read N- to C-terminus: tRNA uridine(34) hydroxylase (319 aa).

The 95-residue stretch at 125–219 (LDENTVVIDA…YGKDPEVQGD (95 aa)) folds into the Rhodanese domain. The active-site Cysteine persulfide intermediate is cysteine 179.

This sequence belongs to the TrhO family.

It catalyses the reaction uridine(34) in tRNA + AH2 + O2 = 5-hydroxyuridine(34) in tRNA + A + H2O. Functionally, catalyzes oxygen-dependent 5-hydroxyuridine (ho5U) modification at position 34 in tRNAs. The protein is tRNA uridine(34) hydroxylase of Lactococcus lactis subsp. lactis (strain IL1403) (Streptococcus lactis).